The following is a 118-amino-acid chain: Large ribosomal subunit protein bL20 (118 aa).

It belongs to the bacterial ribosomal protein bL20 family. In terms of assembly, part of the 50S ribosomal subunit. Contacts proteins L13 and L21.

Its function is as follows. Binds directly to 23S rRNA, probably serving to organize its structure. The chain is Large ribosomal subunit protein bL20 (rplT) from Deinococcus radiodurans (strain ATCC 13939 / DSM 20539 / JCM 16871 / CCUG 27074 / LMG 4051 / NBRC 15346 / NCIMB 9279 / VKM B-1422 / R1).